The following is a 374-amino-acid chain: Alanine racemase (374 aa).

Lysine 35 acts as the Proton acceptor; specific for D-alanine in catalysis. Lysine 35 is modified (N6-(pyridoxal phosphate)lysine). Position 130 (arginine 130) interacts with substrate. Residue tyrosine 253 is the Proton acceptor; specific for L-alanine of the active site. A substrate-binding site is contributed by methionine 305.

The protein belongs to the alanine racemase family. The cofactor is pyridoxal 5'-phosphate.

It catalyses the reaction L-alanine = D-alanine. It functions in the pathway amino-acid biosynthesis; D-alanine biosynthesis; D-alanine from L-alanine: step 1/1. In terms of biological role, catalyzes the interconversion of L-alanine and D-alanine. May also act on other amino acids. The chain is Alanine racemase (alr) from Ralstonia pickettii (strain 12J).